A 93-amino-acid polypeptide reads, in one-letter code: Exodeoxyribonuclease 7 small subunit (93 aa).

Low complexity predominate over residues 1-17 (MAKSSASSLSSAKPVAA). Residues 1-22 (MAKSSASSLSSAKPVAAGPDAS) are disordered.

This sequence belongs to the XseB family. In terms of assembly, heterooligomer composed of large and small subunits.

Its subcellular location is the cytoplasm. The catalysed reaction is Exonucleolytic cleavage in either 5'- to 3'- or 3'- to 5'-direction to yield nucleoside 5'-phosphates.. Bidirectionally degrades single-stranded DNA into large acid-insoluble oligonucleotides, which are then degraded further into small acid-soluble oligonucleotides. The sequence is that of Exodeoxyribonuclease 7 small subunit from Polaromonas naphthalenivorans (strain CJ2).